The primary structure comprises 393 residues: Large ribosomal subunit protein uL2m (393 aa).

Residues 1 to 43 constitute a mitochondrion transit peptide; it reads MLVLGSLRSALSCSSTASLISKRNPCYPYGILCRTLSQSVKLW. The interval 337 to 393 is disordered; it reads AMNKCDHPHGGGRGKSKSNKLSMSPWGQLAKGYKTRRGKNQNRMKVKDRPRGKDARL. Basic residues predominate over residues 369 to 380; the sequence is YKTRRGKNQNRM. Basic and acidic residues predominate over residues 381–393; sequence KVKDRPRGKDARL.

Belongs to the universal ribosomal protein uL2 family. As to quaternary structure, component of the mitochondrial large ribosomal subunit (mt-LSU). Mature yeast 74S mitochondrial ribosomes consist of a small (37S) and a large (54S) subunit. The 37S small subunit contains a 15S ribosomal RNA (15S mt-rRNA) and 34 different proteins. The 54S large subunit contains a 21S rRNA (21S mt-rRNA) and 46 different proteins. uL2m has a Na/K ligand binding site.

Its subcellular location is the mitochondrion. Functionally, component of the mitochondrial ribosome (mitoribosome), a dedicated translation machinery responsible for the synthesis of mitochondrial genome-encoded proteins, including at least some of the essential transmembrane subunits of the mitochondrial respiratory chain. The mitoribosomes are attached to the mitochondrial inner membrane and translation products are cotranslationally integrated into the membrane. The polypeptide is Large ribosomal subunit protein uL2m (RML2) (Saccharomyces cerevisiae (strain ATCC 204508 / S288c) (Baker's yeast)).